The sequence spans 218 residues: Probable 1-Cys peroxiredoxin (218 aa).

Positions 5–166 (WALGDLVPDI…VLRVLDSLQL (162 aa)) constitute a Thioredoxin domain. Residue Cys47 is the Cysteine sulfenic acid (-SOH) intermediate of the active site.

This sequence belongs to the peroxiredoxin family. Prx6 subfamily.

The protein localises to the nucleus. The protein resides in the cytoplasm. The catalysed reaction is a hydroperoxide + [thioredoxin]-dithiol = an alcohol + [thioredoxin]-disulfide + H2O. Its function is as follows. Thiol-specific peroxidase that catalyzes the reduction of hydrogen peroxide and organic hydroperoxides to water and alcohols, respectively. Seems to contribute to the inhibition of germination during stress. Associated with the rehydration events involved in the recovery of the desiccation-tolerant moss. This Syntrichia ruralis (Great hairy screw-moss) protein is Probable 1-Cys peroxiredoxin.